Here is a 76-residue protein sequence, read N- to C-terminus: Contulakin-G (76 aa).

Positions 1-22 (MQTAYWVMVMMMVWIAAPLSEG) are cleaved as a signal peptide. A propeptide spanning residues 23-50 (GKLNDVIRGLVPDDITPQLILGSLISRR) is cleaved from the precursor. Q51 carries the post-translational modification Pyrrolidone carboxylic acid. Residues 51–76 (QSEEGGSNATKKPYILRASDQVASGP) are disordered. An O-linked (GalNAc...) threonine glycan is attached at T60. Residues 67–76 (RASDQVASGP) constitute a propeptide that is removed on maturation.

Belongs to the conotoxin C superfamily. O-glycosylated. The glycosylation seems to enhance the affinity to the neurotensin receptors. Expressed by the venom duct.

It localises to the secreted. Its function is as follows. Acts as an agonist of neurotensin receptors. It binds to human neurotensin type 1 receptor (NTSR1), rat neurotensin types 1 and 2 receptors (NTSR1/NTSR2) and mouse neurotensin type 3 receptor (SORT1). The chain is Contulakin-G from Conus geographus (Geography cone).